Consider the following 447-residue polypeptide: Omega-6 fatty acid desaturase, chloroplastic (447 aa).

A chloroplast-targeting transit peptide spans 1 to 65; that stretch reads MESAITISNH…TRRKSTLVQA (65 aa). Valine 66 carries the N-acetylvaline modification. Positions 171–175 match the Histidine box-1 motif; that stretch reads HDCAH. The Histidine box-2 motif lies at 207 to 211; that stretch reads HDQHH. Positions 367–371 match the Histidine box-3 motif; the sequence is HIPHH.

This sequence belongs to the fatty acid desaturase type 1 family.

The protein localises to the plastid. The protein resides in the chloroplast membrane. The enzyme catalyses a (9Z)-octadecenoyl-containing glycerolipid + 2 reduced [2Fe-2S]-[ferredoxin] + O2 + 2 H(+) = a (9Z,12Z)-octadecadienoyl-containing glycerolipid + 2 oxidized [2Fe-2S]-[ferredoxin] + 2 H2O. Its pathway is lipid metabolism; polyunsaturated fatty acid biosynthesis. Functionally, chloroplast omega-6 fatty acid desaturase introduces the second double bond in the biosynthesis of 16:3 and 18:3 fatty acids, important constituents of plant membranes. It is thought to use ferredoxin as an electron donor and to act on fatty acids esterified to galactolipids, sulfolipids and phosphatidylglycerol. The polypeptide is Omega-6 fatty acid desaturase, chloroplastic (Spinacia oleracea (Spinach)).